The sequence spans 763 residues: Ethylene receptor 2 (763 aa).

A run of 3 helical transmembrane segments spans residues 58-78 (FLIA…ATCS), 86-106 (IVLQ…ITMF), and 115-135 (VVLA…ATAI). Residues Cys97 and His101 each coordinate Cu cation. A GAF domain is found at 190-339 (DRHTILYTTM…VVADQVAVAL (150 aa)). The Histidine kinase domain occupies 382 to 615 (AMYDGMRRPM…TIMLALQFQL (234 aa)). Residues 641-760 (QVILVDSDDT…ALGDELYRVL (120 aa)) enclose the Response regulatory domain. Asp692 is modified (4-aspartylphosphate).

It belongs to the ethylene receptor family. Requires Cu cation as cofactor. As to expression, expressed in anthers and hulls.

It is found in the endoplasmic reticulum membrane. It catalyses the reaction ATP + protein L-histidine = ADP + protein N-phospho-L-histidine.. In terms of biological role, ethylene receptor related to bacterial two-component regulators. Acts as a negative regulator of ethylene signaling. May delay the transition from the vegetative stage to the floral stage by up-regulating GI (GIGANTEA) and RCN1 and cause starch accumulation in stems by down-regulating the alpha-amylase AMY3D. This chain is Ethylene receptor 2, found in Oryza sativa subsp. indica (Rice).